The chain runs to 410 residues: Argininosuccinate synthase (410 aa).

10 to 18 (AYSGGLDTS) contacts ATP. 2 residues coordinate L-citrulline: Tyr88 and Ser93. An ATP-binding site is contributed by Gly118. 3 residues coordinate L-aspartate: Thr120, Asn124, and Asp125. L-citrulline is bound at residue Asn124. L-citrulline contacts are provided by Arg128, Ser177, Ser186, Glu262, and Tyr274.

The protein belongs to the argininosuccinate synthase family. Type 1 subfamily. Homotetramer.

It localises to the cytoplasm. The enzyme catalyses L-citrulline + L-aspartate + ATP = 2-(N(omega)-L-arginino)succinate + AMP + diphosphate + H(+). It participates in amino-acid biosynthesis; L-arginine biosynthesis; L-arginine from L-ornithine and carbamoyl phosphate: step 2/3. This chain is Argininosuccinate synthase, found in Thermoanaerobacter pseudethanolicus (strain ATCC 33223 / 39E) (Clostridium thermohydrosulfuricum).